The chain runs to 385 residues: tRNA (guanine-N(7)-)-methyltransferase non-catalytic subunit wuho (385 aa).

WD repeat units lie at residues 68–108, 155–194, and 198–236; these read KVEV…AKLL, GHLS…DIHS, and GHKE…ELLH.

This sequence belongs to the WD repeat TRM82 family. In terms of assembly, forms a heterodimer with the catalytic subunit Mettl1. Interacts with mei-P26 and weakly interacts with bgcn; required for the function or formation of the mei-P26-bgcn-bam-sxl complex. Interacts with nanos; may be involved in mei-P26-dependent derepression of the BMP signaling pathway. Interacts with Myc; the interaction may be mediated by mei-P26 and may be involved in the regulation of ribosome biogenesis. In terms of tissue distribution, in testis, it is present at high level in hub cells, a niche for germline stem cells of testis. Ubiquitously expressed in all testicular cells throughout spermatogenesis. Ubiquitously expressed in all germline and somatic cells of the ovary.

It is found in the nucleus. The protein localises to the cytoplasm. It participates in tRNA modification; N(7)-methylguanine-tRNA biosynthesis. In terms of biological role, required for the Mettl1-dependent formation of N(7)-methylguanine at position 46 (m7G46) in tRNA. In the Mettl1-wuho methyltransferase complex, it is required to stabilize and induce conformational changes of the catalytic subunit. Required for binding of nanos mRNA and repression of translation by the mei-P26-bgcn-bam-sxl complex. May cooperate with mei-P26 and nanos to derepress the BMP signaling pathway. May cooperate with mei-P26 to suppress expression of a subset of microRNAs. May cooperate with mei-P26 to regulate bam expression levels in germline cells during gametogenesis. Required to promote mitosis to meiosis transition during gametogenesis. May regulate germline cell division in part by regulating ribosome biogenesis. In Drosophila grimshawi (Hawaiian fruit fly), this protein is tRNA (guanine-N(7)-)-methyltransferase non-catalytic subunit wuho.